A 322-amino-acid chain; its full sequence is Putative A-type inclusion protein (322 aa).

Residues 284 to 322 form a disordered region; the sequence is LTTEATGSVEVAPPSTDVTEPISDVTPSVDVEPEHPPAF.

Belongs to the chordopoxvirinae A26 protein family.

Functionally, encodes a truncated version of poxvirus A26 protein. The protein is Putative A-type inclusion protein of Vaccinia virus (strain Copenhagen) (VACV).